The sequence spans 141 residues: MTVQFAADKTNIPGRQLFRKWVGAALNKPAEIVIRIVGMQEGEVLNRKFRGKDSATNVLTFVYSDDVPLLGDIVLCAPVISREAEQQNKDLVAHYAHLIVHGVLHLQGYDHISDEDAVVMESLETKIITRLNYPDPYVIQQ.

The Zn(2+) site is built by H101, H105, and H111.

Belongs to the endoribonuclease YbeY family. Requires Zn(2+) as cofactor.

Its subcellular location is the cytoplasm. Single strand-specific metallo-endoribonuclease involved in late-stage 70S ribosome quality control and in maturation of the 3' terminus of the 16S rRNA. The protein is Endoribonuclease YbeY of Nitrosomonas eutropha (strain DSM 101675 / C91 / Nm57).